A 201-amino-acid polypeptide reads, in one-letter code: Probable chemoreceptor glutamine deamidase CheD (201 aa).

Belongs to the CheD family.

It carries out the reaction L-glutaminyl-[protein] + H2O = L-glutamyl-[protein] + NH4(+). Probably deamidates glutamine residues to glutamate on methyl-accepting chemotaxis receptors (MCPs), playing an important role in chemotaxis. The protein is Probable chemoreceptor glutamine deamidase CheD of Chlorobium luteolum (strain DSM 273 / BCRC 81028 / 2530) (Pelodictyon luteolum).